Consider the following 65-residue polypeptide: MPNPDNRSDNAEKLQEMVQNTVDNFNEAKETAELSNEKDRAAIEAKNQRRLESIDSLKSEIKDES.

It belongs to the Tlp family.

Its subcellular location is the spore core. This Bacillus cereus (strain B4264) protein is Small, acid-soluble spore protein Tlp.